We begin with the raw amino-acid sequence, 207 residues long: Ras-related protein RABH1e (207 aa).

A GTP-binding site is contributed by 16 to 23 (GDQSVGKT). The Effector region motif lies at 38 to 46 (YQATIGIDF). Residues 64–68 (DTAGQ), 122–125 (NKTD), and 152–153 (SA) contribute to the GTP site. 2 S-geranylgeranyl cysteine lipidation sites follow: cysteine 205 and cysteine 207. Position 207 is a cysteine methyl ester (cysteine 207).

Belongs to the small GTPase superfamily. Rab family.

It localises to the golgi apparatus membrane. Protein transport. Regulator of membrane traffic from the Golgi apparatus towards the endoplasmic reticulum (ER). The protein is Ras-related protein RABH1e (RABH1E) of Arabidopsis thaliana (Mouse-ear cress).